Here is a 427-residue protein sequence, read N- to C-terminus: MAPERRSRLSDAGILVSLLALTSLVPVQAAVTTSKPDYAKRAERVLRSTPLIDGHNDLPFAIRRSTHDQIYDGKVPFETALKGQTDLPRMRKGRMGGQFWSVYVGCPSDPNTPIDFPTFATRDTLEQIDVARRLVDKYSKDLMYCDNPACAKKAFREGKIGSFIGIEGGHQVGSSIAALRQAFYAGARYMTLTHNCDNAWATAASTVRAGKPDLGMTEFGPALIKEMNRLGMLVDLSHVSHQTMRDVLKVTKAPVIFSHSSAYAVSKHLRNVPDDVLKTVAKNNGVVMVTFVRSFVNIDNPDSVTVDDIVKHIFHIAEVAGWDHVGLGGDYDGTTELPKGLEDVSKYPYLIEKVLEHGATEEQARKLIGENILRVWTEVEKIGKRIQNSGALPVEEVWQGRNWTQSLTKRSTFIPTESPTQLEFGCD.

The signal sequence occupies residues 1 to 29 (MAPERRSRLSDAGILVSLLALTSLVPVQA). Positions 55, 57, and 167 each coordinate Zn(2+). Cysteines 106 and 196 form a disulfide. Residue His-194 participates in substrate binding. 2 residues coordinate Zn(2+): His-238 and His-259. Substrate-binding residues include Arg-270 and Asp-330. A glycan (N-linked (GlcNAc...) asparagine) is linked at Asn-402.

This sequence belongs to the metallo-dependent hydrolases superfamily. Peptidase M19 family. Zn(2+) is required as a cofactor.

The catalysed reaction is an L-aminoacyl-L-amino acid + H2O = 2 an L-alpha-amino acid. In terms of biological role, hydrolyzes a wide range of dipeptides. In Arthroderma otae (strain ATCC MYA-4605 / CBS 113480) (Microsporum canis), this protein is Putative dipeptidase MCYG_02918.